A 101-amino-acid chain; its full sequence is Urease subunit beta (101 aa).

Belongs to the urease beta subunit family. As to quaternary structure, heterotrimer of UreA (gamma), UreB (beta) and UreC (alpha) subunits. Three heterotrimers associate to form the active enzyme.

The protein resides in the cytoplasm. The enzyme catalyses urea + 2 H2O + H(+) = hydrogencarbonate + 2 NH4(+). The protein operates within nitrogen metabolism; urea degradation; CO(2) and NH(3) from urea (urease route): step 1/1. The chain is Urease subunit beta from Burkholderia ambifaria (strain ATCC BAA-244 / DSM 16087 / CCUG 44356 / LMG 19182 / AMMD) (Burkholderia cepacia (strain AMMD)).